The sequence spans 367 residues: Chorismate synthase (367 aa).

NADP(+) is bound at residue arginine 48. FMN-binding positions include 125–127 (RSS), 238–239 (NA), glycine 278, 293–297 (KPTSS), and arginine 319.

It belongs to the chorismate synthase family. Homotetramer. It depends on FMNH2 as a cofactor.

It carries out the reaction 5-O-(1-carboxyvinyl)-3-phosphoshikimate = chorismate + phosphate. The protein operates within metabolic intermediate biosynthesis; chorismate biosynthesis; chorismate from D-erythrose 4-phosphate and phosphoenolpyruvate: step 7/7. Its function is as follows. Catalyzes the anti-1,4-elimination of the C-3 phosphate and the C-6 proR hydrogen from 5-enolpyruvylshikimate-3-phosphate (EPSP) to yield chorismate, which is the branch point compound that serves as the starting substrate for the three terminal pathways of aromatic amino acid biosynthesis. This reaction introduces a second double bond into the aromatic ring system. This is Chorismate synthase from Halorhodospira halophila (strain DSM 244 / SL1) (Ectothiorhodospira halophila (strain DSM 244 / SL1)).